The chain runs to 287 residues: Centromere protein P (287 aa).

Residues 1 to 37 (MDNSVYQVYEDEIQLLEEEIKLLSDKYEDIQQESTFF) adopt a coiled-coil conformation.

The protein belongs to the CENP-P/CTF19 family. Component of the CENPA-HI complex, at least composed of CENPH, CENPI, CENPK, CENPL, CENPM, CENPO and CENPP.

Its subcellular location is the nucleus. It is found in the chromosome. The protein resides in the centromere. In terms of biological role, component of the CENPA-HI complex, a centromeric complex involved in assembly of kinetochore proteins, mitotic progression and chromosome segregation. The sequence is that of Centromere protein P (CENPP) from Gallus gallus (Chicken).